Reading from the N-terminus, the 315-residue chain is MSQLDALREMTVVVADTGDIEAIKQYQPQDATTNPSLILNASALPQYASLIDDAVAYAKAKSDDKAQQLIDAEDKLAVNIGLEILKIVPGRISTEVDARLSYDTEATIEKARQIMKLYNDAGISNDRILIKIASTWQGIRAAEVLEKEGINCNLTLLFSQAQARACAEAGVYLISPFVGRILDWYKAAEKKEYAPAEDPGVISVTNIYNYYKQYGYQTVVMGASFRNVGEITEIAGCDRLTIAPPLLKELAESNAPLVRKLEYKGEVKARPAPLTEAEFYWQHNQDPMAVEKLAEGIRKFAVDIEKLEAMLAAKL.

Catalysis depends on Lys-131, which acts as the Schiff-base intermediate with substrate.

The protein belongs to the transaldolase family. Type 1 subfamily. As to quaternary structure, homodimer.

The protein resides in the cytoplasm. It catalyses the reaction D-sedoheptulose 7-phosphate + D-glyceraldehyde 3-phosphate = D-erythrose 4-phosphate + beta-D-fructose 6-phosphate. The protein operates within carbohydrate degradation; pentose phosphate pathway; D-glyceraldehyde 3-phosphate and beta-D-fructose 6-phosphate from D-ribose 5-phosphate and D-xylulose 5-phosphate (non-oxidative stage): step 2/3. Its function is as follows. Transaldolase is important for the balance of metabolites in the pentose-phosphate pathway. The protein is Transaldolase of Actinobacillus pleuropneumoniae serotype 3 (strain JL03).